Consider the following 625-residue polypeptide: Putative xanthine/uracil permease C887.17 (625 aa).

The next 10 membrane-spanning stretches (helical) occupy residues 49–69 (AGLT…TILV), 107–127 (AAIS…PVGM), 154–174 (EALL…VIGL), 192–212 (AGIG…LGVI), 246–263 (MWVG…LMMY), 328–348 (FAIA…GTLY), 369–389 (VAYI…CSPV), 406–426 (GILG…APIF), 429–449 (IPVW…MKST), and 465–485 (ITIA…AGII). The tract at residues 595–625 (EAVGESESFSNRQQDFRTPYAGIDMDTDDRI) is disordered.

The protein belongs to the nucleobase:cation symporter-2 (NCS2) (TC 2.A.40) family. Azg-like subfamily.

It is found in the golgi apparatus membrane. The sequence is that of Putative xanthine/uracil permease C887.17 from Schizosaccharomyces pombe (strain 972 / ATCC 24843) (Fission yeast).